The following is a 214-amino-acid chain: Leucyl/phenylalanyl-tRNA--protein transferase (214 aa).

Residues 194–214 form a disordered region; the sequence is FAPPGYSPDPASVVQRSSQTS.

The protein belongs to the L/F-transferase family.

It is found in the cytoplasm. It catalyses the reaction N-terminal L-lysyl-[protein] + L-leucyl-tRNA(Leu) = N-terminal L-leucyl-L-lysyl-[protein] + tRNA(Leu) + H(+). The enzyme catalyses N-terminal L-arginyl-[protein] + L-leucyl-tRNA(Leu) = N-terminal L-leucyl-L-arginyl-[protein] + tRNA(Leu) + H(+). It carries out the reaction L-phenylalanyl-tRNA(Phe) + an N-terminal L-alpha-aminoacyl-[protein] = an N-terminal L-phenylalanyl-L-alpha-aminoacyl-[protein] + tRNA(Phe). Its function is as follows. Functions in the N-end rule pathway of protein degradation where it conjugates Leu, Phe and, less efficiently, Met from aminoacyl-tRNAs to the N-termini of proteins containing an N-terminal arginine or lysine. This Cereibacter sphaeroides (strain ATCC 17025 / ATH 2.4.3) (Rhodobacter sphaeroides) protein is Leucyl/phenylalanyl-tRNA--protein transferase.